The following is an 828-amino-acid chain: Protein SEY1 homolog (828 aa).

The Cytoplasmic portion of the chain corresponds to 1 to 718; it reads MTEDVMNDDF…SSKNGISWKN (718 aa). Positions 44 to 284 constitute a GB1/RHD3-type G domain; it reads GFNYNVLSIL…VPSDGFFYYA (241 aa). Position 54-61 (54-61) interacts with GTP; the sequence is GCQSSGKS. A helical transmembrane segment spans residues 719-739; the sequence is IPPPFWILLLLCSWNELCSVL. Topologically, residues 740 to 742 are lumenal; it reads RIV. Residues 743–763 form a helical membrane-spanning segment; that stretch reads FKVQVLIPLIILGFIVVQYFS. At 764 to 828 the chain is on the cytoplasmic side; it reads HLVFGTSADA…NDSGKKAEEN (65 aa).

This sequence belongs to the TRAFAC class dynamin-like GTPase superfamily. GB1/RHD3 GTPase family. RHD3 subfamily.

The protein resides in the endoplasmic reticulum membrane. In terms of biological role, probable GTP-binding protein that may be involved in cell development. In Babesia bovis, this protein is Protein SEY1 homolog.